A 177-amino-acid polypeptide reads, in one-letter code: EDLANVSAPQVVVFDPSEAEINKTQKATLVCLAKDFYPDHVELSWWVNGKEVHNGVSTDPQPYKQDPKSDHSKYCLSSRLRVSAAFWHNPRNHFRCQVQFFGLTDDDEWTYNSSKPITQNISAHTRGRADCGISSASYQQGVLSATVLYEILLGKATLYAVLVSALVLMAMVKRKDS.

The tract at residues 1 to 150 (EDLANVSAPQ…GVLSATVLYE (150 aa)) is c region. N-linked (GlcNAc...) asparagine glycosylation is found at Asn5 and Asn22. Cys31 and Cys96 are disulfide-bonded. A helical transmembrane segment spans residues 146-168 (TVLYEILLGKATLYAVLVSALVL). Residues 169–177 (MAMVKRKDS) lie on the Cytoplasmic side of the membrane.

The protein localises to the membrane. The protein is T-cell receptor beta chain C region of Oryctolagus cuniculus (Rabbit).